Reading from the N-terminus, the 541-residue chain is NAD(P)H-quinone oxidoreductase subunit 2 A, chloroplastic (541 aa).

14 helical membrane passes run 24–44 (LLLFDGSLIFPECILIFGLIL), 57–77 (IPWLYFIPSTSLVMSITALLF), 99–119 (IFQFLILLCSTLCIPLSVEYI), 124–144 (MAITEFLLFVLTATLGGMFLC), 149–169 (FITIFVAPECFSLCSYLLSGY), 183–203 (YLLMGGASSSILVHGFSWLYG), 227–247 (PGISIALIFITVGIGFKLSPA), 289–309 (ILSPTPVVAFLSVTSKVAASA), 326–346 (WHLLLEILAILSMILGNLIAI), 354–374 (MLAYSSIGQIGYVIIGIIVGD), 385–405 (YMLFYISMNLGTFACIVLFGL), 426–446 (ALSLALCLLSLGGLPPLAGFF), 449–469 (LYLFWCGWQAGLYFLVLIGLL), and 515–535 (MIVCVIASTIPGISMNPIIAI).

The protein belongs to the complex I subunit 2 family. NDH is composed of at least 16 different subunits, 5 of which are encoded in the nucleus.

The protein localises to the plastid. It is found in the chloroplast thylakoid membrane. It carries out the reaction a plastoquinone + NADH + (n+1) H(+)(in) = a plastoquinol + NAD(+) + n H(+)(out). The enzyme catalyses a plastoquinone + NADPH + (n+1) H(+)(in) = a plastoquinol + NADP(+) + n H(+)(out). In terms of biological role, NDH shuttles electrons from NAD(P)H:plastoquinone, via FMN and iron-sulfur (Fe-S) centers, to quinones in the photosynthetic chain and possibly in a chloroplast respiratory chain. The immediate electron acceptor for the enzyme in this species is believed to be plastoquinone. Couples the redox reaction to proton translocation, and thus conserves the redox energy in a proton gradient. The chain is NAD(P)H-quinone oxidoreductase subunit 2 A, chloroplastic from Coffea arabica (Arabian coffee).